Consider the following 513-residue polypeptide: GMP synthase [glutamine-hydrolyzing] (513 aa).

One can recognise a Glutamine amidotransferase type-1 domain in the interval 8 to 198; the sequence is MILVLDFGSQ…VFGVCECVGE (191 aa). Catalysis depends on Cys-85, which acts as the Nucleophile. Active-site residues include His-172 and Glu-174. The GMPS ATP-PPase domain occupies 199–388; sequence WSMENFIEIE…LGIPDEIVWR (190 aa). 226–232 is a binding site for ATP; that stretch reads SGGVDSS.

Homodimer.

It carries out the reaction XMP + L-glutamine + ATP + H2O = GMP + L-glutamate + AMP + diphosphate + 2 H(+). It participates in purine metabolism; GMP biosynthesis; GMP from XMP (L-Gln route): step 1/1. Catalyzes the synthesis of GMP from XMP. This Bacillus licheniformis (strain ATCC 14580 / DSM 13 / JCM 2505 / CCUG 7422 / NBRC 12200 / NCIMB 9375 / NCTC 10341 / NRRL NRS-1264 / Gibson 46) protein is GMP synthase [glutamine-hydrolyzing].